The following is a 22-amino-acid chain: Dioicin-1 (22 aa).

The protein localises to the secreted. It is found in the extracellular space. Its subcellular location is the golgi apparatus. The protein resides in the vacuole. It catalyses the reaction Endohydrolysis of the N-glycosidic bond at one specific adenosine on the 28S rRNA.. Its function is as follows. Nicks pBR322 dsDNA. Has adenine polynucleotide glycosidase activity on herring sperm ssDNA. The polypeptide is Dioicin-1 (Phytolacca dioica (Bella sombra tree)).